A 324-amino-acid chain; its full sequence is COP9 signalosome complex subunit 6 (324 aa).

One can recognise an MPN domain in the interval 38 to 171 (VALHPLVILN…VSVFESVIDI (134 aa)).

This sequence belongs to the peptidase M67A family. CSN6 subfamily. Component of the CSN complex, composed of COPS1/GPS1, COPS2, COPS3, COPS4, COPS5, COPS6, COPS7 (COPS7A or COPS7B), COPS8 and COPS9. In the complex, it probably interacts directly with COPS2, COPS4, COPS5, COPS7 (COPS7A or COPS7B) and COPS9. Interacts with the translation initiation factor EIF3S6. Interacts weakly with RBX1. Directly interacts with COP1 and 14-3-3 protein sigma/SFN. Interacts with ERCC6.

It localises to the cytoplasm. Its subcellular location is the nucleus. In terms of biological role, component of the COP9 signalosome complex (CSN), a complex involved in various cellular and developmental processes. The CSN complex is an essential regulator of the ubiquitin (Ubl) conjugation pathway by mediating the deneddylation of the cullin subunits of SCF-type E3 ligase complexes, leading to decrease the Ubl ligase activity of SCF-type complexes such as SCF, CSA or DDB2. The complex is also involved in phosphorylation of p53/TP53, c-jun/JUN, IkappaBalpha/NFKBIA, ITPK1 and IRF8, possibly via its association with CK2 and PKD kinases. CSN-dependent phosphorylation of TP53 and JUN promotes and protects degradation by the Ubl system, respectively. Has some glucocorticoid receptor-responsive activity. Stabilizes COP1 through reducing COP1 auto-ubiquitination and decelerating COP1 turnover rate, hence regulates the ubiquitination of COP1 targets, including SFN. In Mus musculus (Mouse), this protein is COP9 signalosome complex subunit 6 (Cops6).